The chain runs to 594 residues: MIMSDRLTAFKELIQAGGAKRPADLIIKNGQLVNVMTAEIYPAEVAIYQGKIVAVDPDVSAYQGTETRVIDAKQQYIVPGLIDGHIHVECSKLSMTSFAEAVVPHGTTSIISGLDEYISVIGVDGLSEIFKEVDQLPMRVFWGAPFKTPYTIPASTIADNIDSTVQAQLQKRSDVYGVWETVREAVETLDEDTLKTLLNAQDNHVPVWGCAPMATGTKLNEYLMSGVRVDHESYDHQELLEKVRKGINVVIRESSVTHFLAENIRAITETNGQIARHVSFCTDDVNAMDIVNKGHLDHLVRLAIAAGVAPMTAIQMATINSAEAYRIDDQVGLIAPGRNADILLVSDLEAFEIKRVLAKGQPVATDGHINQSIERPVRPASLANTIIREAVQASDFEYHVAADASQVTVQTIASEGPFVRHAKTKTLTVEDGIVQIDPAKDVALISVLERFGKNGNQSLGFTSGWTLKKGAMASTAAPDDNNIIVMGVNPDDMALAVNTLIERDGGQVVVADGQILSFLPLPIAGIVSDVTPAELAVQEEGILKASQAIGSEVVDPMFYMTFLPITAIPDLAITDLGNVDCNELRLFDPILTIQ.

The protein belongs to the metallo-dependent hydrolases superfamily. Adenine deaminase family. It depends on Mn(2+) as a cofactor.

It catalyses the reaction adenine + H2O + H(+) = hypoxanthine + NH4(+). This Latilactobacillus sakei subsp. sakei (strain 23K) (Lactobacillus sakei subsp. sakei) protein is Adenine deaminase 1.